A 641-amino-acid polypeptide reads, in one-letter code: Ribosomal oxygenase 1 (641 aa).

Met1 is subject to N-acetylmethionine. Disordered regions lie at residues 1 to 35 and 54 to 80; these read MDGL…LPLR and RTQT…DALP. Residues 12–23 are compositionally biased toward basic residues; that stretch reads RRGRPKRRRKPQ. A phosphoserine mark is found at Ser60, Ser63, and Ser109. The JmjC domain maps to 294 to 439; it reads CSLRLLCPQA…DFLEAILPLA (146 aa). 3 residues coordinate Fe cation: His340, Asp342, and His405.

This sequence belongs to the ROX family. NO66 subfamily. In terms of assembly, interacts with SP7/OSX; the interaction is direct. Interacts with MYC. Interacts with PHF19; leading to its recruitment to H3K36me3 sites. Requires Fe(2+) as cofactor. Widely expressed. Overexpressed in lung carcinomas.

The protein localises to the nucleus. The protein resides in the nucleolus. Its subcellular location is the nucleoplasm. The catalysed reaction is N(6),N(6)-dimethyl-L-lysyl(36)-[histone H3] + 2 2-oxoglutarate + 2 O2 = L-lysyl(36)-[histone H3] + 2 formaldehyde + 2 succinate + 2 CO2. The enzyme catalyses N(6)-methyl-L-lysyl-[protein] + 2-oxoglutarate + O2 = L-lysyl-[protein] + formaldehyde + succinate + CO2. It carries out the reaction L-histidyl-[protein] + 2-oxoglutarate + O2 = (3S)-3-hydroxy-L-histidyl-[protein] + succinate + CO2. Its function is as follows. Oxygenase that can act as both a histone lysine demethylase and a ribosomal histidine hydroxylase. Specifically demethylates 'Lys-4' (H3K4me) and 'Lys-36' (H3K36me) of histone H3, thereby playing a central role in histone code. Preferentially demethylates trimethylated H3 'Lys-4' (H3K4me3) and monomethylated H3 'Lys-4' (H3K4me1) residues, while it has weaker activity for dimethylated H3 'Lys-36' (H3K36me2). Acts as a regulator of osteoblast differentiation via its interaction with SP7/OSX by demethylating H3K4me and H3K36me, thereby inhibiting SP7/OSX-mediated promoter activation. Also catalyzes demethylation of non-histone proteins, such as CGAS: demethylation of monomethylated CGAS promotes interaction between CGAS and PARP1, followed by PARP1 inactivation. Also catalyzes the hydroxylation of 60S ribosomal protein L8 on 'His-216', thereby playing a role in ribosome biogenesis. Participates in MYC-induced transcriptional activation. The chain is Ribosomal oxygenase 1 from Homo sapiens (Human).